The following is a 166-amino-acid chain: HTH-type transcriptional regulator PrsX (166 aa).

The HTH marR-type domain maps to 25–159; the sequence is EHLLMQLCIR…FEVINKKLLA (135 aa).

It is found in the cytoplasm. This chain is HTH-type transcriptional regulator PrsX (prsX), found in Escherichia coli O6:H1 (strain CFT073 / ATCC 700928 / UPEC).